Reading from the N-terminus, the 141-residue chain is Large-conductance mechanosensitive channel (141 aa).

The next 3 membrane-spanning stretches (helical) occupy residues 17–37 (MDLA…ASIV), 40–60 (LIMP…LFIA), and 86–106 (GNFV…FIIV).

It belongs to the MscL family. Homopentamer.

The protein resides in the cell inner membrane. Its function is as follows. Channel that opens in response to stretch forces in the membrane lipid bilayer. May participate in the regulation of osmotic pressure changes within the cell. In Thiobacillus denitrificans (strain ATCC 25259 / T1), this protein is Large-conductance mechanosensitive channel.